Consider the following 955-residue polypeptide: Anion exchange protein 4 (955 aa).

3 disordered regions span residues 20-50 (VGQLDSGPSSGPCPDDPSDTGSRELGPPEDP), 154-190 (HTQTTGSRPCWGPAQSRKAAHNKEAPMQQQCQSPLRQ), and 331-352 (PHRTQAEDRHRNGPLAPSPELQ). Transmembrane regions (helical) follow at residues 387–407 (AVLYIYLATVTNAITFGGLLG), 415–435 (GVLESLLGTAVAGAAFCLMAG), 472–492 (VGIWVAVFCLALVATEASVLV), and 503–523 (FCALISLIFIYDAVGKMLNLA). Residues 387–955 (AVLYIYLATV…KAPEINISVN (569 aa)) form a membrane (anion exchange) region. N-linked (GlcNAc...) asparagine glycans are attached at residues N548 and N572. Transmembrane regions (helical) follow at residues 596–616 (VPDIAFFSLLLFLTSFLFAIA), 637–657 (FSSILAILLGCGLDALLGLAM), 684–704 (PWWLSVAAALPALLLSILIFM), 730–750 (LFCVALLMLLTSVLGLPWYVS), 785–804 (LTGLAVFTLTGVSIFLAPVL), 811–830 (VLYGIFLYMGVAALSSIQFM), and 871–891 (LWIIKSTPAAIIFPLMLLGLV). The tract at residues 918–955 (RNVPEKGLEPGHSFSGSDSEDSELMYQPKAPEINISVN) is disordered. A glycan (N-linked (GlcNAc...) asparagine) is linked at N951.

This sequence belongs to the anion exchanger (TC 2.A.31) family. As to expression, highly expressed in kidney. Expressed in the outer medulla and the inner medulla in the kidney cortex. Only expressed in beta-intercalated cells.

The protein localises to the lateral cell membrane. Its subcellular location is the apical cell membrane. It localises to the basolateral cell membrane. The enzyme catalyses 2 hydrogencarbonate(out) + chloride(in) + Na(+)(out) = 2 hydrogencarbonate(in) + chloride(out) + Na(+)(in). The catalysed reaction is K(+)(in) + 2 hydrogencarbonate(in) + chloride(out) = K(+)(out) + 2 hydrogencarbonate(out) + chloride(in). It carries out the reaction Li(+)(in) + 2 hydrogencarbonate(in) + chloride(out) = Li(+)(out) + 2 hydrogencarbonate(out) + chloride(in). It catalyses the reaction Rb(+)(in) + 2 hydrogencarbonate(in) + chloride(out) = Rb(+)(out) + 2 hydrogencarbonate(out) + chloride(in). The enzyme catalyses Cs(+)(in) + 2 hydrogencarbonate(in) + chloride(out) = Cs(+)(out) + 2 hydrogencarbonate(out) + chloride(in). Its function is as follows. Electroneutral Cl(-)/HCO3(-) antiporter that favors chloride ion entry and efflux of hydrogencarbonate and sodium ion across the basolateral membrane and may participat in salivary secretion. Also mediates Cl(-)/HCO3(-) exchange activity in the presence of K(+) as well as Cs(+), Li(+), and Rb(+). Does not contribute to Cl(-)/HCO3(-) exchanger in the apical membrane of the upper villous epithelium. The sequence is that of Anion exchange protein 4 from Oryctolagus cuniculus (Rabbit).